A 524-amino-acid polypeptide reads, in one-letter code: Cytokinin dehydrogenase 7 (524 aa).

An N-terminal signal peptide occupies residues 1–22 (MAARCSIAFMIMASCLSVVVSG). The N-linked (GlcNAc...) asparagine glycan is linked to asparagine 42. Positions 55–233 (VAAAPEAVLH…TRARIGLMPA (179 aa)) constitute an FAD-binding PCMH-type domain. Residues glycine 91 and glycine 93 each coordinate FAD. Residue histidine 94 is modified to Pros-8alpha-FAD histidine. Residues serine 95 and glutamine 99 each coordinate FAD. N-linked (GlcNAc...) asparagine glycosylation is present at asparagine 121. The FAD site is built by aspartate 157, threonine 162, serine 168, isoleucine 172, and isoleucine 223. N-linked (GlcNAc...) asparagine glycosylation is found at asparagine 277 and asparagine 320. FAD is bound by residues tyrosine 472, serine 507, and glutamine 510.

The protein belongs to the oxygen-dependent FAD-linked oxidoreductase family. As to quaternary structure, monomer. The cofactor is FAD.

Its subcellular location is the secreted. The protein localises to the extracellular space. It carries out the reaction N(6)-dimethylallyladenine + A + H2O = 3-methyl-2-butenal + adenine + AH2. Its function is as follows. Catalyzes the oxidation of cytokinins, a family of N(6)-substituted adenine derivatives that are plant hormones, where the substituent is an isopentenyl group. The protein is Cytokinin dehydrogenase 7 (CKX7) of Oryza sativa subsp. japonica (Rice).